We begin with the raw amino-acid sequence, 333 residues long: Glycerol-3-phosphate dehydrogenase [NAD(P)+] (333 aa).

S10, W11, H31, R32, and K105 together coordinate NADPH. The sn-glycerol 3-phosphate site is built by K105, G136, and S138. A140 lines the NADPH pocket. Sn-glycerol 3-phosphate contacts are provided by K191, D244, S254, R255, and N256. K191 serves as the catalytic Proton acceptor. R255 is an NADPH binding site. 2 residues coordinate NADPH: I279 and E281.

The protein belongs to the NAD-dependent glycerol-3-phosphate dehydrogenase family.

Its subcellular location is the cytoplasm. It catalyses the reaction sn-glycerol 3-phosphate + NAD(+) = dihydroxyacetone phosphate + NADH + H(+). The catalysed reaction is sn-glycerol 3-phosphate + NADP(+) = dihydroxyacetone phosphate + NADPH + H(+). It participates in membrane lipid metabolism; glycerophospholipid metabolism. Catalyzes the reduction of the glycolytic intermediate dihydroxyacetone phosphate (DHAP) to sn-glycerol 3-phosphate (G3P), the key precursor for phospholipid synthesis. This is Glycerol-3-phosphate dehydrogenase [NAD(P)+] from Chlorobium chlorochromatii (strain CaD3).